The chain runs to 375 residues: LIM domain-binding protein 1 (375 aa).

2 disordered regions span residues 248 to 294 (PPAE…TFAL) and 331 to 375 (DAAN…QASQ). Low complexity predominate over residues 266–282 (SGGSTMSSGGGNTNNSN). One can recognise an LIM interaction domain (LID) domain in the interval 300-339 (DVMVVGEPTLMGGEFGDEDERLITRLENTQFDAANGIDDE).

This sequence belongs to the LDB family. As to quaternary structure, forms homodimers and heterodimers. Interacts with the LIM domain of LIM/homeobox factor lhx1/lim1, and with lhx3/lim3 and lhx5/lim5. Activates lhx1/lim1 by binding. The stoichiometry of lhx1/lim1 and ldb1 is important for their function and an excess of ldb1 can inhibit lhx1/lim1 function. When bound to lhx1/lim1, escapes degradation by rnf12. The N-terminus interacts with the N-terminal region of rnf12. In terms of processing, undergoes rnf12-mediated ubiquitin-proteasome-dependent degradation. As to expression, ubiquitously expressed in the early gastrula before localizing to the dorsal region of the vegetal hemisphere, which contains the Spemann organizer. Expressed in the CNS, pronephros and tail bud in neurula and tail-bud stage embryos. Expressed in multiple adult tissues including brain, heart, lung, stomach, intestine, liver, spleen, kidney, ovary, muscle and skin.

Its subcellular location is the nucleus. Functionally, binds to the LIM domain of a wide variety of LIM domain-containing transcription factors. Acts as a coactivator together with otx2 to stimulate lhx1/lim1-mediated activation of the gsc promoter in the Spemann organizer. Acts synergistically with lhx1/lim1 and ssbp in axis formation. The polypeptide is LIM domain-binding protein 1 (ldb1) (Xenopus laevis (African clawed frog)).